Consider the following 279-residue polypeptide: Dihydropteroate synthase type-1 (279 aa).

The 258-residue stretch at 1 to 258 (MVTVFGILNL…APGDLRSAIT (258 aa)) folds into the Pterin-binding domain. Residue Asn-9 participates in Mg(2+) binding. (7,8-dihydropterin-6-yl)methyl diphosphate-binding positions include Asp-82, Asn-101, Asp-173, Lys-212, and 246–248 (RTH).

Belongs to the DHPS family. Homodimer or homotrimer. Mg(2+) is required as a cofactor.

The catalysed reaction is (7,8-dihydropterin-6-yl)methyl diphosphate + 4-aminobenzoate = 7,8-dihydropteroate + diphosphate. Its pathway is cofactor biosynthesis; tetrahydrofolate biosynthesis; 7,8-dihydrofolate from 2-amino-4-hydroxy-6-hydroxymethyl-7,8-dihydropteridine diphosphate and 4-aminobenzoate: step 1/2. Its function is as follows. Catalyzes the condensation of para-aminobenzoate (pABA) with 6-hydroxymethyl-7,8-dihydropterin diphosphate (DHPt-PP) to form 7,8-dihydropteroate (H2Pte), the immediate precursor of folate derivatives. This chain is Dihydropteroate synthase type-1 (sulI), found in Corynebacterium glutamicum (Brevibacterium saccharolyticum).